Here is a 20-residue protein sequence, read N- to C-terminus: Short cationic peptide-3a (20 aa).

Residue Glu20 is modified to Glutamic acid 1-amide.

In terms of tissue distribution, expressed by the venom gland.

The protein resides in the secreted. In Cupiennius salei (American wandering spider), this protein is Short cationic peptide-3a.